A 577-amino-acid polypeptide reads, in one-letter code: External alternative NAD(P)H-ubiquinone oxidoreductase B1, mitochondrial (577 aa).

The transit peptide at 1–35 (MRGFTYLSKVLHSHSSYSKLLVLCSVSTGGLLVYA) directs the protein to the mitochondrion. FAD is bound at residue 57–87 (RVVVLGTGWGGTSFLKDVDISSYDVQVVSPR). 221-257 (LHFVIVGGGPTGVEFAAELHDYVYEDLVKIYPSVKDF) provides a ligand contact to NAD(+). Positions 378–413 (KVMEDISTIFEAADKDDSGTLSVEEFRDVLEDIIIR) constitute an EF-hand domain. Positions 391, 393, 395, 397, and 402 each coordinate Ca(2+). A Microbody targeting signal motif is present at residues 568–577 (YIFGRDSSRI).

The protein belongs to the NADH dehydrogenase family. Requires FAD as cofactor.

It localises to the mitochondrion inner membrane. The protein localises to the peroxisome. It catalyses the reaction a quinone + NADH + H(+) = a quinol + NAD(+). The catalysed reaction is a ubiquinone + NADH + H(+) = a ubiquinol + NAD(+). With respect to regulation, activity is calcium-dependent with a more pronounced effect at higher pH. Functionally, calcium-dependent NAD(P)H dehydrogenase. Binds calcium ions. Alternative NADH-ubiquinone oxidoreductase which catalyzes the oxidation of mitochondrial NADH does not translocate protons across the inner mitochondrial membrane. The protein is External alternative NAD(P)H-ubiquinone oxidoreductase B1, mitochondrial (NDB1) of Solanum tuberosum (Potato).